Reading from the N-terminus, the 245-residue chain is Eukaryotic translation initiation factor 6 (245 aa).

Phosphotyrosine is present on Y113. T165 bears the Phosphothreonine mark. S166 carries the post-translational modification Phosphoserine. Phosphoserine; by CK1 occurs at positions 174 and 175. S235 carries the post-translational modification Phosphoserine; by PKC. 2 positions are modified to phosphoserine: S239 and S243.

It belongs to the eIF-6 family. As to quaternary structure, monomer. Associates with the 60S ribosomal subunit. Interacts with RACK1. Interacts with DICER1, AGO2, TARBP2, MOV10 and RPL7A; they form a large RNA-induced silencing complex (RISC). Phosphorylation at Ser-174 and Ser-175 by CSNK1D/CK1 promotes nuclear export. In terms of processing, ufmylated by UFL1. Detected in bladder, duodenum, liver, esophagus, pancreas, adipose tissue, megakaryocytes and testis with lower levels in muscle (at protein level).

The protein resides in the cytoplasm. It is found in the nucleus. It localises to the nucleolus. Its function is as follows. Binds to the 60S ribosomal subunit and prevents its association with the 40S ribosomal subunit to form the 80S initiation complex in the cytoplasm. Behaves as a stimulatory translation initiation factor downstream insulin/growth factors. Is also involved in ribosome biogenesis. Associates with pre-60S subunits in the nucleus and is involved in its nuclear export. Cytoplasmic release of TIF6 from 60S subunits and nuclear relocalization is promoted by a RACK1 (RACK1)-dependent protein kinase C activity. In tissues responsive to insulin, controls fatty acid synthesis and glycolysis by exerting translational control of adipogenic transcription factors such as CEBPB, CEBPD and ATF4 that have G/C rich or uORF in their 5'UTR. Required for ROS-dependent megakaryocyte maturation and platelets formation, controls the expression of mitochondrial respiratory chain genes involved in reactive oxygen species (ROS) synthesis. Involved in miRNA-mediated gene silencing by the RNA-induced silencing complex (RISC). Required for both miRNA-mediated translational repression and miRNA-mediated cleavage of complementary mRNAs by RISC. Modulates cell cycle progression and global translation of pre-B cells, its activation seems to be rate-limiting in tumorigenesis and tumor growth. The polypeptide is Eukaryotic translation initiation factor 6 (Eif6) (Mus musculus (Mouse)).